The sequence spans 137 residues: Large ribosomal subunit protein uL16 (137 aa).

The protein belongs to the universal ribosomal protein uL16 family. As to quaternary structure, part of the 50S ribosomal subunit.

Its function is as follows. Binds 23S rRNA and is also seen to make contacts with the A and possibly P site tRNAs. In Stenotrophomonas maltophilia (strain R551-3), this protein is Large ribosomal subunit protein uL16.